The following is a 215-amino-acid chain: Calcium-binding protein 7 (215 aa).

The Cytoplasmic portion of the chain corresponds to 1 to 188 (MPFHPVTAAL…QIRQTCVRKS (188 aa)). 2 consecutive EF-hand domains span residues 33–68 (DELE…LGYM) and 69–104 (PNEV…KLST). 9 residues coordinate Ca(2+): Asp46, Asp48, Asn50, Glu57, Asp82, Asp84, Asp86, Gln88, and Glu93. A helical; Anchor for type IV membrane protein membrane pass occupies residues 189-209 (LICAFAIAFIISVMLIAANQV). Residues 210 to 215 (LRSGMK) are Extracellular-facing.

In terms of assembly, interacts with PI4KB. This binding competes with FREQ/NCS1 binding in a calcium-dependent manner.

The protein localises to the golgi apparatus. It is found in the trans-Golgi network membrane. It localises to the cytoplasm. Its subcellular location is the perinuclear region. The protein resides in the cell membrane. Its function is as follows. Negatively regulates Golgi-to-plasma membrane trafficking by interacting with PI4KB and inhibiting its activity. This Homo sapiens (Human) protein is Calcium-binding protein 7 (CABP7).